A 343-amino-acid polypeptide reads, in one-letter code: MKYIDEVKIQVFAGDGGNGVASFRREKFIPKGGPDGGDGGRGGSIYALADHNLNTLIDYRFTPVFRAKRGENGRGSDCYGKGAEDIVLRMPVGTIITDYMTGELVADLKQNQQKVLLAKGGKGGLGNLHFKSSTNRAPRQFTHGEAGEQFELKLELRVLADVGLLGLPNAGKSTLIRAVSAARPKVADYPFTTLYPNLGVVRVDAGRSFIMADIPGLIEGAAEGAGLGHRFLKHLSRTHLLLHIIDVAPFDENIDPVQSARALVDELRKFDEVLYRKPRWLIFNKVDLLPEDEQQAVCTHLLQALDWEDRWFAISALTGRGCQALTYAIMGYLEQLQPVTEET.

The 159-residue stretch at 1–159 (MKYIDEVKIQ…FELKLELRVL (159 aa)) folds into the Obg domain. Positions 160-334 (ADVGLLGLPN…LTYAIMGYLE (175 aa)) constitute an OBG-type G domain. GTP-binding positions include 166 to 173 (GLPNAGKS), 191 to 195 (FTTLY), 213 to 216 (DIPG), 284 to 287 (NKVD), and 315 to 317 (SAL). Residues Ser-173 and Thr-193 each contribute to the Mg(2+) site.

The protein belongs to the TRAFAC class OBG-HflX-like GTPase superfamily. OBG GTPase family. In terms of assembly, monomer. Mg(2+) serves as cofactor.

The protein localises to the cytoplasm. An essential GTPase which binds GTP, GDP and possibly (p)ppGpp with moderate affinity, with high nucleotide exchange rates and a fairly low GTP hydrolysis rate. Plays a role in control of the cell cycle, stress response, ribosome biogenesis and in those bacteria that undergo differentiation, in morphogenesis control. This Nitrosomonas eutropha (strain DSM 101675 / C91 / Nm57) protein is GTPase Obg.